We begin with the raw amino-acid sequence, 121 residues long: Large ribosomal subunit protein uL22 (121 aa).

It belongs to the universal ribosomal protein uL22 family. Part of the 50S ribosomal subunit.

Functionally, this protein binds specifically to 23S rRNA; its binding is stimulated by other ribosomal proteins, e.g. L4, L17, and L20. It is important during the early stages of 50S assembly. It makes multiple contacts with different domains of the 23S rRNA in the assembled 50S subunit and ribosome. In terms of biological role, the globular domain of the protein is located near the polypeptide exit tunnel on the outside of the subunit, while an extended beta-hairpin is found that lines the wall of the exit tunnel in the center of the 70S ribosome. The sequence is that of Large ribosomal subunit protein uL22 from Synechococcus sp. (strain WH7803).